The sequence spans 105 residues: Large ribosomal subunit protein bL21 (105 aa).

It belongs to the bacterial ribosomal protein bL21 family. As to quaternary structure, part of the 50S ribosomal subunit. Contacts protein L20.

In terms of biological role, this protein binds to 23S rRNA in the presence of protein L20. The chain is Large ribosomal subunit protein bL21 from Rickettsia canadensis (strain McKiel).